The following is a 147-amino-acid chain: Ribosome maturation factor RimP (147 aa).

It belongs to the RimP family.

The protein localises to the cytoplasm. In terms of biological role, required for maturation of 30S ribosomal subunits. In Sulfurihydrogenibium azorense (strain DSM 15241 / OCM 825 / Az-Fu1), this protein is Ribosome maturation factor RimP.